The primary structure comprises 317 residues: Probable RuBisCO transcriptional regulator (317 aa).

Positions 6-63 (FTLDQLRILKAIAKEGSFKKAANSLYVSQPAISLQIQNLERQLNVALFERGNKKATLT) constitute an HTH lysR-type domain. Residues 23–42 (FKKAANSLYVSQPAISLQIQ) constitute a DNA-binding region (H-T-H motif).

It belongs to the LysR transcriptional regulatory family.

It is found in the plastid. It localises to the chloroplast. Functionally, trans-acting transcriptional regulator of RuBisCO genes (rbcL and rbcS) expression. This chain is Probable RuBisCO transcriptional regulator (rbcR), found in Porphyra purpurea (Red seaweed).